We begin with the raw amino-acid sequence, 288 residues long: Syntaxin-1B (288 aa).

Over residues 1-13 (MKDRTQELRSAKD) the composition is skewed to basic and acidic residues. Residues 1 to 20 (MKDRTQELRSAKDSDDEEEV) form a disordered region. Topologically, residues 1–264 (MKDRTQELRS…KYQSKARRKK (264 aa)) are cytoplasmic. Serine 10 and serine 14 each carry phosphoserine. Positions 29–104 (MDEFFEQVEE…IEQSIEQEEG (76 aa)) form a coiled coil. The t-SNARE coiled-coil homology domain maps to 191–253 (LNEIETRHNE…ERAVSDTKKA (63 aa)). Residues 265-288 (IMIIICCVVLGVVLASSIGGTLGL) form a helical; Anchor for type IV membrane protein membrane-spanning segment.

Belongs to the syntaxin family. Interacts with OTOF. Interacts with SYT6 and SYT8; the interaction is Ca(2+)-dependent. In terms of processing, phosphorylated by CK2. (Microbial infection) Targeted and hydrolyzed by C.botulinum neurotoxin type C (BoNT/C); cleavage by BoNT/C inhibits neurotransmitter release. Probably hydrolyzes the 252-Lys-|-Ala-253 bond.

The protein resides in the membrane. Functionally, potentially involved in docking of synaptic vesicles at presynaptic active zones. May mediate Ca(2+)-regulation of exocytosis acrosomal reaction in sperm. The polypeptide is Syntaxin-1B (STX1B) (Bos taurus (Bovine)).